The following is a 318-amino-acid chain: NADH-ubiquinone oxidoreductase chain 1 (318 aa).

The next 9 helical transmembrane spans lie at 2-22 (FLMN…FLTL), 37-57 (PNIV…KLFI), 69-89 (LMFT…WIPM), 100-120 (LGVL…LWSG), 136-156 (VAQT…IMMM), 171-191 (HMWL…STLA), 231-251 (IIMM…NPLF), 253-273 (ELFT…FLWV), and 293-313 (FLPL…LSAG).

Belongs to the complex I subunit 1 family. Core subunit of respiratory chain NADH dehydrogenase (Complex I) which is composed of 45 different subunits.

The protein localises to the mitochondrion inner membrane. The catalysed reaction is a ubiquinone + NADH + 5 H(+)(in) = a ubiquinol + NAD(+) + 4 H(+)(out). Its function is as follows. Core subunit of the mitochondrial membrane respiratory chain NADH dehydrogenase (Complex I) which catalyzes electron transfer from NADH through the respiratory chain, using ubiquinone as an electron acceptor. Essential for the catalytic activity and assembly of complex I. The sequence is that of NADH-ubiquinone oxidoreductase chain 1 (MT-ND1) from Euphractus sexcinctus (Six-banded armadillo).